A 699-amino-acid polypeptide reads, in one-letter code: Polyribonucleotide nucleotidyltransferase (699 aa).

Residues aspartate 487 and aspartate 493 each coordinate Mg(2+). A KH domain is found at 554–613 (PRMLNMKINPEKIRDVIGKGGAVIRALQEETGTVIEIEDDGSITISSVSAEGAQKAKARI). The region spanning 623-691 (GKVYEGTVVR…ERGKIRLSMK (69 aa)) is the S1 motif domain.

This sequence belongs to the polyribonucleotide nucleotidyltransferase family. Mg(2+) serves as cofactor.

The protein resides in the cytoplasm. It catalyses the reaction RNA(n+1) + phosphate = RNA(n) + a ribonucleoside 5'-diphosphate. In terms of biological role, involved in mRNA degradation. Catalyzes the phosphorolysis of single-stranded polyribonucleotides processively in the 3'- to 5'-direction. This chain is Polyribonucleotide nucleotidyltransferase, found in Azoarcus sp. (strain BH72).